We begin with the raw amino-acid sequence, 246 residues long: Transcriptional regulatory protein LytR (246 aa).

A Response regulatory domain is found at 2 to 116; sequence KALIIDDEPL…RIEQAVNKVR (115 aa). Residue Asp-53 is modified to 4-aspartylphosphate. Residues 141–245 form the HTH LytTR-type domain; it reads LPVEIDDKIH…MKDFKASIGL (105 aa).

As to quaternary structure, homodimer; when phosphorylated. Post-translationally, phosphorylated and dephosphorylated by LytS.

The protein localises to the cytoplasm. Its function is as follows. Member of the two-component regulatory system LytR/LytS that regulates genes involved in autolysis, programmed cell death, biofilm formation and cell wall metabolism. Also participates in sensing and responding to host defense cationic antimicrobial peptides (HDPs). Upon phosphorylation by LytS, functions as a transcription regulator by direct binding to promoter regions of target genes including lrgA and lrgB, to positively regulate their expression. This Staphylococcus aureus (strain USA300) protein is Transcriptional regulatory protein LytR (lytR).